Here is a 286-residue protein sequence, read N- to C-terminus: MKKHKIGIYEKALPKNITWQERLSLAKACGFEFIEMSIDESNDRLSRLNWTKSERIALHQSIIQSGITIPSMCLSAHRRFPFGSKDKKIRQKSFEIMEKAIDLSVNLGIRTIQLAGYDVYYEKQDEETIKYFQEGIEFAVTLAASAQVTLAVEIMDTPFMSSISRWKKWDTIINSPWFTVYPDIGNLSAWNNNIEEELTLGIDKISAIHLKDTYPVTETSKGQFRDVPFGQGCVDFVHFFSLLKKLNYRGAFLIEMWTEKNEEPLLEIIQARKWIVQQMEKAGLLC.

It belongs to the L-ribulose-5-phosphate 3-epimerase family.

The catalysed reaction is L-ribulose 5-phosphate = L-xylulose 5-phosphate. Functionally, catalyzes the isomerization of L-xylulose-5-phosphate to L-ribulose-5-phosphate. The protein is Putative L-ribulose-5-phosphate 3-epimerase SgbU (sgbU) of Haemophilus influenzae (strain ATCC 51907 / DSM 11121 / KW20 / Rd).